The primary structure comprises 478 residues: UDP-N-acetylmuramate--L-alanine ligase (478 aa).

122–128 contributes to the ATP binding site; the sequence is GTHGKTT.

The protein belongs to the MurCDEF family.

The protein resides in the cytoplasm. It catalyses the reaction UDP-N-acetyl-alpha-D-muramate + L-alanine + ATP = UDP-N-acetyl-alpha-D-muramoyl-L-alanine + ADP + phosphate + H(+). The protein operates within cell wall biogenesis; peptidoglycan biosynthesis. Its function is as follows. Cell wall formation. This Stenotrophomonas maltophilia (strain R551-3) protein is UDP-N-acetylmuramate--L-alanine ligase.